The following is a 443-amino-acid chain: Glucose-6-phosphate isomerase (443 aa).

The Proton donor role is filled by Glu285. Residues His306 and Lys420 contribute to the active site.

It belongs to the GPI family.

It localises to the cytoplasm. The catalysed reaction is alpha-D-glucose 6-phosphate = beta-D-fructose 6-phosphate. The protein operates within carbohydrate biosynthesis; gluconeogenesis. It functions in the pathway carbohydrate degradation; glycolysis; D-glyceraldehyde 3-phosphate and glycerone phosphate from D-glucose: step 2/4. Its function is as follows. Catalyzes the reversible isomerization of glucose-6-phosphate to fructose-6-phosphate. The sequence is that of Glucose-6-phosphate isomerase from Staphylococcus haemolyticus (strain JCSC1435).